A 61-amino-acid polypeptide reads, in one-letter code: DNA-directed RNA polymerase subunit 12-like protein (61 aa).

Zn(2+) contacts are provided by Cys-21, Cys-24, Cys-38, and Cys-41.

It belongs to the archaeal Rpo12/eukaryotic RPC10 RNA polymerase subunit family.

The protein localises to the nucleus. The polypeptide is DNA-directed RNA polymerase subunit 12-like protein (NRPB12L) (Arabidopsis thaliana (Mouse-ear cress)).